The chain runs to 270 residues: Monofunctional glycosyltransferase (270 aa).

Positions 1-35 (MKRSDRYKTYNKPNDSNDSNQLHHNTYFKPVNKPQ) are disordered. A compositionally biased stretch (polar residues) spans 11–24 (NKPNDSNDSNQLHH). Residues 47 to 67 (LLIPILIIIGIIIGVMYALSL) traverse the membrane as a helical segment.

It belongs to the glycosyltransferase 51 family.

The protein resides in the cell membrane. It catalyses the reaction [GlcNAc-(1-&gt;4)-Mur2Ac(oyl-L-Ala-gamma-D-Glu-L-Lys-D-Ala-D-Ala)](n)-di-trans,octa-cis-undecaprenyl diphosphate + beta-D-GlcNAc-(1-&gt;4)-Mur2Ac(oyl-L-Ala-gamma-D-Glu-L-Lys-D-Ala-D-Ala)-di-trans,octa-cis-undecaprenyl diphosphate = [GlcNAc-(1-&gt;4)-Mur2Ac(oyl-L-Ala-gamma-D-Glu-L-Lys-D-Ala-D-Ala)](n+1)-di-trans,octa-cis-undecaprenyl diphosphate + di-trans,octa-cis-undecaprenyl diphosphate + H(+). Its pathway is cell wall biogenesis; peptidoglycan biosynthesis. Peptidoglycan polymerase that catalyzes glycan chain elongation using lipid-linked disaccharide-pentapeptide as the substrate. This is Monofunctional glycosyltransferase from Staphylococcus saprophyticus subsp. saprophyticus (strain ATCC 15305 / DSM 20229 / NCIMB 8711 / NCTC 7292 / S-41).